Reading from the N-terminus, the 360-residue chain is Protein phosphatase methylesterase 1 (360 aa).

The interval 26 to 50 is disordered; the sequence is DEDDIPEPAVMPPTGNSSSTANTED. Active-site residues include Ser167, Asp192, and His316.

This sequence belongs to the AB hydrolase superfamily.

The enzyme catalyses [phosphatase 2A protein]-C-terminal L-leucine methyl ester + H2O = [phosphatase 2A protein]-C-terminal L-leucine + methanol + H(+). Demethylates proteins that have been reversibly carboxymethylated. Demethylates the phosphatase PP2A catalytic subunit. Involved in the regulation of filamentous growth. This Candida albicans (strain SC5314 / ATCC MYA-2876) (Yeast) protein is Protein phosphatase methylesterase 1 (PPE1).